The chain runs to 930 residues: A disintegrin and metalloproteinase with thrombospondin motifs 5 (930 aa).

Positions 1-21 (MRLEWAPLLLLLLLLSASCLS) are cleaved as a signal peptide. Positions 22–261 (LAADSPAAAP…PQTWWRRRRR (240 aa)) are excised as a propeptide. Positions 31–53 (PAQDKTRQPQAAAAAAEPDQPQG) are enriched in low complexity. 2 disordered regions span residues 31–68 (PAQDKTRQPQAAAAAAEPDQPQGEETRERGHLQPLAGQ) and 207–231 (ASCETPASPSGPQESPSVHSRSRRR). Positions 207 to 214 (ASCETPAS) match the Cysteine switch motif. Zn(2+) is bound at residue Cys-209. Residues 211–225 (TPASPSGPQESPSVH) are compositionally biased toward polar residues. The Peptidase M12B domain occupies 267–476 (RQVELLLVAD…GHGNCLLDLP (210 aa)). 8 disulfides stabilise this stretch: Cys-342-Cys-394, Cys-371-Cys-376, Cys-388-Cys-471, Cys-426-Cys-455, Cys-497-Cys-519, Cys-508-Cys-529, Cys-514-Cys-548, and Cys-542-Cys-553. His-410 contacts Zn(2+). Glu-411 is an active-site residue. Residues His-414 and His-420 each contribute to the Zn(2+) site. Positions 485-566 (ELPGQTYDAT…TKKKYYSTSS (82 aa)) constitute a Disintegrin domain. Asn-498 is a glycosylation site (N-linked (GlcNAc...) asparagine). Residues 567-622 (HGNWGSWGPWGQCSRSCGGGVQFAYRHCNNPAPRNSGRYCTGKRAIYRSCSVTPCP) enclose the TSP type-1 1 domain. 2 C-linked (Man) tryptophan glycosylation sites follow: Trp-570 and Trp-573. Disulfide bonds link Cys-579–Cys-616, Cys-583–Cys-621, and Cys-594–Cys-606. Ser-582 is a glycosylation site (O-linked (Fuc...) serine). N-linked (GlcNAc...) asparagine glycosylation is found at Asn-728, Asn-802, and Asn-807. The segment at 732-874 (TKIIGTFNKK…HGSNKVGPHS (143 aa)) is spacer. Residues 875-929 (TQLQWVTGPWLACSRTCDTGWHTRTVQCQDGNRKLAKGCLLSQRPSAFKQCLLKK) form the TSP type-1 2 domain.

Requires Zn(2+) as cofactor. Post-translationally, the precursor is cleaved by furin and PCSK7 outside of the cell. In terms of processing, glycosylated. Can be O-fucosylated by POFUT2 on a serine or a threonine residue found within the consensus sequence C1-X(2)-(S/T)-C2-G of the TSP type-1 repeat domains where C1 and C2 are the first and second cysteine residue of the repeat, respectively. Fucosylated repeats can then be further glycosylated by the addition of a beta-1,3-glucose residue by the glucosyltransferase, B3GALTL. Fucosylation mediates the efficient secretion of ADAMTS family members. Can also be C-glycosylated with one or two mannose molecules on tryptophan residues within the consensus sequence W-X-X-W of the TPRs, and N-glycosylated. These other glycosylations can also facilitate secretion. In terms of tissue distribution, expressed in skeletal muscle.

The protein resides in the secreted. The protein localises to the extracellular space. It localises to the extracellular matrix. Functionally, metalloproteinase that plays an important role in connective tissue organization, development, inflammation and cell migration. Extracellular matrix (ECM) degrading enzyme that shows proteolytic activity toward the hyalectan group of chondroitin sulfate proteoglycans (CSPGs) including ACAN, VCAN, BCAN and NCAN. Cleavage within the hyalectans occurs at Glu-Xaa recognition motifs. Plays a role in embryonic development, including limb and cardiac morphogenesis, and skeletal muscle development through its VCAN remodeling properties. Cleaves VCAN in the pericellular matrix surrounding myoblasts, facilitating myoblast contact and fusion which is required for skeletal muscle development and regeneration. Participates in the development of brown adipose tissue and browning of white adipose tissue. Plays an important role for T-lymphocyte migration from draining lymph nodes following viral infection. The protein is A disintegrin and metalloproteinase with thrombospondin motifs 5 (Adamts5) of Mus musculus (Mouse).